We begin with the raw amino-acid sequence, 346 residues long: Phosphate acyltransferase (346 aa).

It belongs to the PlsX family. In terms of assembly, homodimer. Probably interacts with PlsY.

It localises to the cytoplasm. The catalysed reaction is a fatty acyl-[ACP] + phosphate = an acyl phosphate + holo-[ACP]. Its pathway is lipid metabolism; phospholipid metabolism. Its function is as follows. Catalyzes the reversible formation of acyl-phosphate (acyl-PO(4)) from acyl-[acyl-carrier-protein] (acyl-ACP). This enzyme utilizes acyl-ACP as fatty acyl donor, but not acyl-CoA. This chain is Phosphate acyltransferase, found in Synechococcus elongatus (strain ATCC 33912 / PCC 7942 / FACHB-805) (Anacystis nidulans R2).